The following is a 587-amino-acid chain: Kelch-like protein 3 (587 aa).

The tract at residues 1–24 (MEGESVKPSPQPTAQAEDEEKNRR) is disordered. Residues 50-117 (CDVMIVAEDV…IYTAEIEVTE (68 aa)) form the BTB domain. Residues 152–254 (CLGIRAFADV…PRDYLVQTVE (103 aa)) enclose the BACK domain. Residue Thr295 is modified to Phosphothreonine. 6 Kelch repeats span residues 302 to 347 (VMIV…FMAG), 348 to 394 (HVYA…VLND), 396 to 441 (LYAV…VVEG), 442 to 490 (KLYA…VLSG), 491 to 537 (QLYA…AVNG), and 539 to 585 (LYVV…VIHK). Thr375 carries the phosphothreonine modification. Residues Ser376 and Ser433 each carry the phosphoserine modification.

This sequence belongs to the KLHL3 family. As to quaternary structure, homodimer. Component of the BCR(KLHL3) E3 ubiquitin ligase complex, at least composed of CUL3 and KLHL3 and RBX1. Interacts with CLDN8. Post-translationally, phosphorylation at Ser-433 by PKA or PKC decreases the interaction with WNK1 and WNK4, leading to inhibit their degradation by the BCR(KLHL3) complex. Phosphorylated at Ser-433 by PKC in response to angiotensin II signaling, decreasing ability to promote degradation of WNK1 and WNK4, leading to activation of Na-Cl cotransporter SLC12A3/NCC. Phosphorylation at Ser-433 is increased by insulin. Dephosphorylated at Ser-433 by calcineurin PPP3CA, promoting degradation of WNK1 and WNK4. In terms of tissue distribution, present at high level in brain and kidney (at protein level). Weakly expressed in other tissues. In kidney, predominantly localizes to the distal convoluted tubule (DCT) and collecting duct, with apical localization in the DCT (at protein level).

The protein resides in the cytoplasm. The protein localises to the cytosol. It localises to the cytoskeleton. The protein operates within protein modification; protein ubiquitination. Functionally, substrate-specific adapter of a BCR (BTB-CUL3-RBX1) E3 ubiquitin ligase complex that acts as a regulator of ion transport in the distal nephron. The BCR(KLHL3) complex acts by mediating ubiquitination and degradation of WNK1 and WNK4, two activators of Na-Cl cotransporter SLC12A3/NCC in distal convoluted tubule cells of kidney, thereby regulating NaCl reabsorption. The BCR(KLHL3) complex also mediates ubiquitination of CLDN8, a tight-junction protein required for paracellular chloride transport in the kidney, leading to its degradation. This is Kelch-like protein 3 from Mus musculus (Mouse).